A 157-amino-acid polypeptide reads, in one-letter code: Small ribosomal subunit protein uS7 (157 aa).

It belongs to the universal ribosomal protein uS7 family. In terms of assembly, part of the 30S ribosomal subunit. Contacts proteins S9 and S11.

Functionally, one of the primary rRNA binding proteins, it binds directly to 16S rRNA where it nucleates assembly of the head domain of the 30S subunit. Is located at the subunit interface close to the decoding center, probably blocks exit of the E-site tRNA. This Francisella tularensis subsp. holarctica (strain OSU18) protein is Small ribosomal subunit protein uS7.